The sequence spans 334 residues: Probable aminoacyl tRNA synthase complex-interacting multifunctional protein 2 (334 aa).

A GST C-terminal domain is found at 280–327 (LDKRLQKQQYFGGSQMSVADVGVYSSLIRMPAVTEKDLTPALVAWRKR).

In terms of assembly, component of the aminoacyl-tRNA synthase complex which is comprised of a bifunctional glutamyl-prolyl-tRNA synthase, the monospecific isoleucyl, leucyl, glutaminyl, methionyl, lysyl, arginyl and aspartyl-tRNA synthases, and three auxiliary proteins.

The protein localises to the cytoplasm. It is found in the cytosol. It localises to the nucleus. Its function is as follows. Required for assembly and stability of the aminoacyl-tRNA synthase complex. In Drosophila melanogaster (Fruit fly), this protein is Probable aminoacyl tRNA synthase complex-interacting multifunctional protein 2.